The chain runs to 2351 residues: MFFKMKNEIDNDPESEKCIKDSTIMRREPQNILSPLMLPNLEIPFSVKDIISRIERAQLHRAREDIDMQLSEIMNNVHRIMTRYTLVFNSSSERNVSLTEHKKKQRTNFLEKMATYAKTIEIREKTLANILAWLEEWNDVLSEMTLMDVDEHHHWIAQMELLPDTLKAIENNVKILSRFSTSFLDEKKKQKKKILSRGTLWKSWKERVIKRPSTARALRPDQMISDQLATNTKVSEIQGMLQELIGTTMFSTLENNAIKYISSTIVNLSTALSMLNDELKCVNFQSSTVYAHETSEAEKELSLKIIRDLSNENEMLQQKLQDAEEKCEQLIRSKIVIEQLYAKLSTSSTLKVLPGPSPQSSRAIIKVGDTEDNMDNILDKELENIVDEVQRKETKDSGIKWDSTISYTAQAERTPDLTELRQQPVASEDISEDSTKDNVSLKKGDFYQEDETDEYQSWKRSHKKATYVYETSGPNLSDNKSGQKVSEAKPSQYYELQVLKKKRKEMKSFSEDKSKSPTEAKRKHLSLTETKSQGGKSGTSMMMLEQFRKVKRESPFDKRPTAAEIKVEPTTESLDKEGKGEIRSLVEPLSMIQFDDTAEPQKGKIKGKKHHISSGTITSKEEKTEEKEELTKQVKSHQLVKSLSRVAKETSESTRVLESPDGKSEQSNLEEFQEAIMAFLKQKIDNIGKAFDKKTVPKEEELLKRAEAEKLGIIKAKMEEYFQKVAETVTKILRKYKDTKKEEQVGEKPIKQKKVVSFMPGLHFQKSPISAKSESSTLLSYESTDPVINNLIQMILAEIESERDIPTVSTVQKDHKEKEKQRQEQYLQEGQEQMSGMSLKQQLLGERNLLKEHYEKISENWEEKKAWLQMKEGKQEQQSQKQWQEEEMWKEEQKQATPKQAEQEEKQKQRGQEEEELPKSSLQRLEEGTQKMKTQGLLLEKENGQMRQIQKEAKHLGPHRRREKGKEKQKPERGLEDLERQIKTKDQMQMKETQPKELEKMVIQTPMTLSPRWKSVLKDVQRSYEGKEFQRNLKTLENLPDEKEPISITPPPSLQYSLPGALPISGQPLTKCIHLTPQQAQEVGITLTPQQAQAQGITLTLQQAQELGIPLTPQQAQALEILFTPQQAQALGIPLTPQQTQVQGITLTPQQDQAPGISLTTQQAQKLGIPLTPQQAQALGIPLTPQQAQELGIPLTPQQAQALRVSLTPQQAQELGIPLTPQQAQALGITLTLQQAQQLGIPLTPQQAQALGITLTPKQVQELGIPLTPQQAQALGITLTPKQAQELGIPLNPQQAQTLGIPLTPKQAQALGIPFTPQQAQALGIPLTPQQAQTQEITLTPQQAQALGMPLTTQQAQELGIPLTPQHAQALGMPLTTQQAQELGIPLTPQQAQALGMPLTTQQAQELGIPLTPQQAQELGIPFTPQQAQAQEITLTPQQAQALGMPLTAQQAQELGITLTPQQAQELGIPLTPQQAQALGIPLIPPQAQELGIPLTPQQAQALGILLIPPQAQELGIPLTPQQAQALGIPLIPPQAQELGIPLTPQQVQALGIPLIPPQAQELEIPLTPQQAQALGIPLTPQQAQELGIPLTPQQAQELGIPLTPQQAQAQGIPLTPQQAQALGISLTPQQAQAQGITLTPQQAQALGVPITPVNAWVSAVTLTSEQTHALESPMNLEQAQEQLLKLGVPLTLDKAHTLGSPLTLKQVQWSHRPFQKSKASLPTGQSIISRLSPSLRLSLASSAPTAEKSSIFGVSSTPLQISRVPLNQGPFAPGKPLEMGILSEPGKLGAPQTLRSSGQTLVYGGQSTSAQFPAPQAPPSPGQLPISRAPPTPGQPFIAGVPPTSGQIPSLWAPLSPGQPLVPEASSIPGDLLESGPLTFSEQLQEFQPPATAEQSPYLQAPSTPGQHLATWTLPGRASSLWIPPTSRHPPTLWPSPAPGKPQKSWSPSVAKKRLAIISSLKSKSVLIHPSAPDFKVAQVPFTTKKFQMSEVSDTSEETQILRDTFAIESFRTFQSHFTKYRTPVYQTPYTDERALLTLMKPTTSPSSLTTLLRTSQISPLEWYQKSRFPPIDKPWILSSVSDTKKPKVMVPPSSPQELEEKRYFVDVEAQKKNLILLNQAIKTCGLPSQLHTMARTLIIEILHMDTVQLGYLFRKYIAYRLIQHARNNIMKRLKAIQNTGKGYEARNLHMMLSRLDDYGKKVMQVWTEKQKSLGQKRNQCLKKMIHVFNQLKKIHELNLSQPIPLIIEEKQIPASTTFVQKPFLKLLMEEDRTSDICKKFRQQEDQTEAIWNVDLSTSSYPIAEKTSMHSLWAQLGGYPDIPRLLQLEVQSTFRKSLASLQSRVKKIPK.

Positions 296–340 form a coiled coil; the sequence is EAEKELSLKIIRDLSNENEMLQQKLQDAEEKCEQLIRSKIVIEQL. 8 disordered regions span residues 412 to 460, 470 to 489, 505 to 538, 593 to 667, 809 to 838, 868 to 976, 1805 to 1837, and 1888 to 1907; these read ERTP…SWKR, ETSG…SEAK, EMKS…GKSG, QFDD…SEQS, STVQ…SGMS, LQMK…RGLE, GGQS…PGQP, and FQPP…STPG. Basic and acidic residues predominate over residues 433–446; it reads DSTKDNVSLKKGDF. Residues 472–484 are compositionally biased toward polar residues; sequence SGPNLSDNKSGQK. The segment covering 506 to 520 has biased composition (basic and acidic residues); it reads MKSFSEDKSKSPTEA. Residues 527 to 538 are compositionally biased toward polar residues; sequence LTETKSQGGKSG. Positions 603–612 are enriched in basic residues; it reads GKIKGKKHHI. Basic and acidic residues-rich tracts occupy residues 619–632 and 812–823; these read SKEE…ELTK and QKDHKEKEKQRQ. Residues 812–860 are a coiled coil; the sequence is QKDHKEKEKQRQEQYLQEGQEQMSGMSLKQQLLGERNLLKEHYEKISEN. The segment covering 824 to 838 has biased composition (polar residues); it reads EQYLQEGQEQMSGMS. 3 stretches are compositionally biased toward basic and acidic residues: residues 901 to 912, 939 to 955, and 964 to 976; these read AEQEEKQKQRGQ, LEKE…EAKH, and KGKE…RGLE. A compositionally biased stretch (pro residues) spans 1816-1835; that stretch reads PQAPPSPGQLPISRAPPTPG. Over residues 1894 to 1907 the composition is skewed to polar residues; sequence AEQSPYLQAPSTPG.

Belongs to the FAM186 family.

The polypeptide is Protein FAM186A (FAM186A) (Homo sapiens (Human)).